The following is a 285-amino-acid chain: Small ribosomal subunit protein uS5x (285 aa).

Basic and acidic residues predominate over residues 1–19; sequence MAERGGERGVERGGERGDF. A disordered region spans residues 1-51; it reads MAERGGERGVERGGERGDFGRGFGGRGGRGDRGGRGRGGRGGRRGGRASEE. Residues 35 to 46 are compositionally biased toward basic residues; that stretch reads RGRGGRGGRRGG. The region spanning 96-159 is the S5 DRBM domain; the sequence is LKDEVMKIMP…ILAKLSVVPV (64 aa).

It belongs to the universal ribosomal protein uS5 family. In terms of assembly, interacts with MBD6.

Functionally, component of the ribosome, a large ribonucleoprotein complex responsible for the synthesis of proteins in the cell. The small ribosomal subunit (SSU) binds messenger RNAs (mRNAs) and translates the encoded message by selecting cognate aminoacyl-transfer RNA (tRNA) molecules. The large subunit (LSU) contains the ribosomal catalytic site termed the peptidyl transferase center (PTC), which catalyzes the formation of peptide bonds, thereby polymerizing the amino acids delivered by tRNAs into a polypeptide chain. The nascent polypeptides leave the ribosome through a tunnel in the LSU and interact with protein factors that function in enzymatic processing, targeting, and the membrane insertion of nascent chains at the exit of the ribosomal tunnel. Plays a role in the assembly and function of the 40S ribosomal subunit. Mutations in this protein affects the control of translational fidelity. Involved in nucleolar processing of pre-18S ribosomal RNA and ribosome assembly. Also involved in RNA-directed DNA methylation (RdDM). This Arabidopsis thaliana (Mouse-ear cress) protein is Small ribosomal subunit protein uS5x.